The sequence spans 256 residues: Small ribosomal subunit protein eS1 (256 aa).

Ala2 bears the N-acetylalanine; partial mark.

The protein belongs to the eukaryotic ribosomal protein eS1 family. Component of the small ribosomal subunit. Mature ribosomes consist of a small (40S) and a large (60S) subunit. The 40S subunit contains about 33 different proteins and 1 molecule of RNA (18S). The 60S subunit contains about 49 different proteins and 3 molecules of RNA (25S, 5.8S and 5S).

It localises to the cytoplasm. In Sclerotinia sclerotiorum (strain ATCC 18683 / 1980 / Ss-1) (White mold), this protein is Small ribosomal subunit protein eS1 (rps1).